Here is a 265-residue protein sequence, read N- to C-terminus: Glutamate racemase 2 (265 aa).

Residues 7 to 8 and 39 to 40 each bind substrate; these read DS and YG. Cysteine 70 (proton donor/acceptor) is an active-site residue. 71 to 72 lines the substrate pocket; sequence NT. Catalysis depends on cysteine 182, which acts as the Proton donor/acceptor. A substrate-binding site is contributed by 183-184; the sequence is TH.

Belongs to the aspartate/glutamate racemases family.

It catalyses the reaction L-glutamate = D-glutamate. Its pathway is cell wall biogenesis; peptidoglycan biosynthesis. In terms of biological role, provides the (R)-glutamate required for cell wall biosynthesis. In Bacillus subtilis (strain 168), this protein is Glutamate racemase 2 (yrpC).